A 668-amino-acid polypeptide reads, in one-letter code: Phosphoglycerate transport system sensor protein PgtB (668 aa).

2 helical membrane passes run 20–40 and 342–362; these read GAFL…LYSW and LILV…HYFI. One can recognise an HAMP domain in the interval 364-416; that stretch reads SRLVKRFTALNQAVVQIGLGRTDSTIPVYGRDELGRIARLLRHTLGQLNMQRR. A Histidine kinase domain is found at 454-663; the sequence is TLAHEINQPL…CVVLQFSVTD (210 aa). Residue His457 is modified to Phosphohistidine; by autocatalysis.

The protein resides in the cell inner membrane. It catalyses the reaction ATP + protein L-histidine = ADP + protein N-phospho-L-histidine.. Member of the two-component regulatory system PgtB/PgtA that regulates the inducible phosphoglycerate transport system. Activates PgtA by phosphorylation. In Salmonella typhimurium (strain LT2 / SGSC1412 / ATCC 700720), this protein is Phosphoglycerate transport system sensor protein PgtB (pgtB).